Consider the following 138-residue polypeptide: Large ribosomal subunit protein uL16 (138 aa).

The tract at residues 1 to 29 is disordered; it reads MSLLQPRKVKWRKPQKGRTKGKATRRNQV. Basic residues predominate over residues 7–25; that stretch reads RKVKWRKPQKGRTKGKATR.

Belongs to the universal ribosomal protein uL16 family. In terms of assembly, part of the 50S ribosomal subunit.

Its function is as follows. Binds 23S rRNA and is also seen to make contacts with the A and possibly P site tRNAs. This chain is Large ribosomal subunit protein uL16, found in Sulfurihydrogenibium sp. (strain YO3AOP1).